Reading from the N-terminus, the 788-residue chain is Protocadherin beta-18 (788 aa).

Residues 1–28 (MEPGKGRAQPTRQVLLFFVFLGGSLVYS) form the signal peptide. Cadherin domains lie at 29–133 (ETWS…TPTF), 134–242 (LNNH…APEF), 243–347 (EKPV…PPEI), 348–452 (AMTS…APAF), and 453–562 (TQTS…SPFV). The Extracellular segment spans residues 29–691 (ETWSYSIAEE…AQADSLTVYL (663 aa)). A glycan (N-linked (GlcNAc...) asparagine) is linked at asparagine 169. N-linked (GlcNAc...) asparagine glycosylation is found at asparagine 419 and asparagine 437. N-linked (GlcNAc...) asparagine glycosylation is present at asparagine 568. Residues 569-672 (GSAPCTELVP…LVDGFSQPYL (104 aa)) enclose the Cadherin 6 domain. Residues 692–712 (VVALASVSSLFLFSVFLFVAV) traverse the membrane as a helical segment. Over 713–788 (RLCRRSRAAS…DSDMEKAPPF (76 aa)) the chain is Cytoplasmic.

The protein localises to the cell membrane. Potential calcium-dependent cell-adhesion protein. The polypeptide is Protocadherin beta-18 (PCDHB18) (Pan troglodytes (Chimpanzee)).